Consider the following 247-residue polypeptide: Small ribosomal subunit protein uS2 (247 aa).

The protein belongs to the universal ribosomal protein uS2 family.

This is Small ribosomal subunit protein uS2 from Cupriavidus taiwanensis (strain DSM 17343 / BCRC 17206 / CCUG 44338 / CIP 107171 / LMG 19424 / R1) (Ralstonia taiwanensis (strain LMG 19424)).